Consider the following 264-residue polypeptide: Thymidylate synthase (264 aa).

A dUMP-binding site is contributed by Arg-21. His-51 contributes to the (6R)-5,10-methylene-5,6,7,8-tetrahydrofolate binding site. 126 to 127 (RR) is a binding site for dUMP. The active-site Nucleophile is Cys-146. DUMP contacts are provided by residues 166-169 (RSAD), Asn-177, and 207-209 (HLY). Asp-169 provides a ligand contact to (6R)-5,10-methylene-5,6,7,8-tetrahydrofolate. Ala-263 is a (6R)-5,10-methylene-5,6,7,8-tetrahydrofolate binding site.

This sequence belongs to the thymidylate synthase family. Bacterial-type ThyA subfamily. In terms of assembly, homodimer.

It is found in the cytoplasm. The enzyme catalyses dUMP + (6R)-5,10-methylene-5,6,7,8-tetrahydrofolate = 7,8-dihydrofolate + dTMP. Its pathway is pyrimidine metabolism; dTTP biosynthesis. Catalyzes the reductive methylation of 2'-deoxyuridine-5'-monophosphate (dUMP) to 2'-deoxythymidine-5'-monophosphate (dTMP) while utilizing 5,10-methylenetetrahydrofolate (mTHF) as the methyl donor and reductant in the reaction, yielding dihydrofolate (DHF) as a by-product. This enzymatic reaction provides an intracellular de novo source of dTMP, an essential precursor for DNA biosynthesis. The chain is Thymidylate synthase from Cytophaga hutchinsonii (strain ATCC 33406 / DSM 1761 / CIP 103989 / NBRC 15051 / NCIMB 9469 / D465).